A 134-amino-acid chain; its full sequence is MARVKRGVTAHAKHKKVLDQAAGFRGRRKNTIRTAKAAVDRSKQYAYRDRKNRKRSFRALWIQRINAAVREQGLTYGRFIDGLAKAGIEIDRKVLSDIAIHEPEAFAALVASAKKALEYLKNTSMPNAFEGAVR.

The protein belongs to the bacterial ribosomal protein bL20 family.

Binds directly to 23S ribosomal RNA and is necessary for the in vitro assembly process of the 50S ribosomal subunit. It is not involved in the protein synthesizing functions of that subunit. The chain is Large ribosomal subunit protein bL20 from Brucella abortus (strain S19).